The sequence spans 93 residues: Small ribosomal subunit protein bS18 (93 aa).

The protein belongs to the bacterial ribosomal protein bS18 family. Part of the 30S ribosomal subunit. Forms a tight heterodimer with protein bS6.

Functionally, binds as a heterodimer with protein bS6 to the central domain of the 16S rRNA, where it helps stabilize the platform of the 30S subunit. In Delftia acidovorans (strain DSM 14801 / SPH-1), this protein is Small ribosomal subunit protein bS18.